Here is a 55-residue protein sequence, read N- to C-terminus: Large ribosomal subunit protein bL33 (55 aa).

Residues M1–L11 show a composition bias toward basic and acidic residues. Residues M1–K27 form a disordered region. The span at T14–T24 shows a compositional bias: polar residues.

This sequence belongs to the bacterial ribosomal protein bL33 family.

In Herminiimonas arsenicoxydans, this protein is Large ribosomal subunit protein bL33.